The chain runs to 310 residues: Homoserine kinase (310 aa).

Residue 91 to 101 (PIGSGLGSSAC) participates in ATP binding.

It belongs to the GHMP kinase family. Homoserine kinase subfamily.

The protein localises to the cytoplasm. It carries out the reaction L-homoserine + ATP = O-phospho-L-homoserine + ADP + H(+). Its pathway is amino-acid biosynthesis; L-threonine biosynthesis; L-threonine from L-aspartate: step 4/5. In terms of biological role, catalyzes the ATP-dependent phosphorylation of L-homoserine to L-homoserine phosphate. This is Homoserine kinase from Shigella flexneri serotype 5b (strain 8401).